The chain runs to 440 residues: Xylose isomerase (440 aa).

Catalysis depends on residues His100 and Asp103. Glu231, Glu267, His270, Asp295, Asp306, Asp308, and Asp338 together coordinate Mg(2+).

It belongs to the xylose isomerase family. In terms of assembly, homotetramer. Mg(2+) serves as cofactor.

The protein resides in the cytoplasm. The enzyme catalyses alpha-D-xylose = alpha-D-xylulofuranose. This chain is Xylose isomerase, found in Burkholderia orbicola (strain MC0-3).